The following is a 123-amino-acid chain: Small ribosomal subunit protein uS13 (123 aa).

Residues 97-123 form a disordered region; the sequence is PVRGQKTKTNARTRKGPKKTVGRKKKK. Residues 101–123 show a composition bias toward basic residues; the sequence is QKTKTNARTRKGPKKTVGRKKKK.

This sequence belongs to the universal ribosomal protein uS13 family. Part of the 30S ribosomal subunit. Forms a loose heterodimer with protein S19. Forms two bridges to the 50S subunit in the 70S ribosome.

Its function is as follows. Located at the top of the head of the 30S subunit, it contacts several helices of the 16S rRNA. In the 70S ribosome it contacts the 23S rRNA (bridge B1a) and protein L5 of the 50S subunit (bridge B1b), connecting the 2 subunits; these bridges are implicated in subunit movement. Contacts the tRNAs in the A and P-sites. The protein is Small ribosomal subunit protein uS13 of Alkaliphilus oremlandii (strain OhILAs) (Clostridium oremlandii (strain OhILAs)).